The sequence spans 266 residues: Probable septum site-determining protein MinC (266 aa).

The span at 1 to 21 (MSEAESTPVEEPVVESTEGSE) shows a compositional bias: low complexity. Residues 1–28 (MSEAESTPVEEPVVESTEGSEAIPEVEQ) form a disordered region.

Belongs to the MinC family. In terms of assembly, interacts with MinD and FtsZ.

Its function is as follows. Cell division inhibitor that blocks the formation of polar Z ring septums. Rapidly oscillates between the poles of the cell to destabilize FtsZ filaments that have formed before they mature into polar Z rings. Prevents FtsZ polymerization. The sequence is that of Probable septum site-determining protein MinC from Thermosynechococcus vestitus (strain NIES-2133 / IAM M-273 / BP-1).